Consider the following 34-residue polypeptide: Brevinin-2Rf (34 aa).

Cys28 and Cys34 are disulfide-bonded.

In terms of tissue distribution, expressed by the skin glands.

The protein resides in the secreted. Functionally, antimicrobial peptide. The polypeptide is Brevinin-2Rf (Pelophylax ridibundus (Marsh frog)).